The following is a 301-amino-acid chain: NADH-cytochrome b5 reductase 3 (301 aa).

A lipid anchor (N-myristoyl glycine) is attached at Gly-2. The FAD-binding FR-type domain occupies 40–152 (DIKYPLRLID…RGPNGLLVYQ (113 aa)). Lys-42 carries the post-translational modification N6-acetyllysine. Residue Tyr-43 is modified to Phosphotyrosine. N6-acetyllysine is present on Lys-50. 6 residues coordinate FAD: Arg-92, Pro-93, Tyr-94, Val-109, Lys-111, and Phe-114. Lys-120 is modified (N6-acetyllysine). 4 residues coordinate FAD: Lys-126, Met-127, Ser-128, and Thr-185.

Belongs to the flavoprotein pyridine nucleotide cytochrome reductase family. Component of a complex composed of cytochrome b5, NADH-cytochrome b5 reductase (CYB5R3) and MTARC2. Interacts with MTLN; the interaction is required to maintain cellular lipid composition and leads to stimulation of mitochondrial respiratory complex I activity. FAD serves as cofactor. In terms of processing, myristoylated. In terms of tissue distribution, ubiquitously expressed. As to expression, expressed only in erythroid tissues, reticulocytes and liver.

It is found in the endoplasmic reticulum membrane. Its subcellular location is the mitochondrion outer membrane. The protein resides in the cytoplasm. The enzyme catalyses 2 Fe(III)-[cytochrome b5] + NADH = 2 Fe(II)-[cytochrome b5] + NAD(+) + H(+). In terms of biological role, catalyzes the reduction of two molecules of cytochrome b5 using NADH as the electron donor. In Rattus norvegicus (Rat), this protein is NADH-cytochrome b5 reductase 3.